A 486-amino-acid chain; its full sequence is N-succinylglutamate 5-semialdehyde dehydrogenase (486 aa).

Position 220–225 (220–225 (GSSRTG)) interacts with NAD(+). Active-site residues include E243 and C277.

The protein belongs to the aldehyde dehydrogenase family. AstD subfamily.

It catalyses the reaction N-succinyl-L-glutamate 5-semialdehyde + NAD(+) + H2O = N-succinyl-L-glutamate + NADH + 2 H(+). It functions in the pathway amino-acid degradation; L-arginine degradation via AST pathway; L-glutamate and succinate from L-arginine: step 4/5. Functionally, catalyzes the NAD-dependent reduction of succinylglutamate semialdehyde into succinylglutamate. The protein is N-succinylglutamate 5-semialdehyde dehydrogenase of Shewanella halifaxensis (strain HAW-EB4).